Reading from the N-terminus, the 205-residue chain is Holliday junction branch migration complex subunit RuvA (205 aa).

The interval 1–68 is domain I; that stretch reads MIGYLEGTLL…QPKPVLIGFN (68 aa). The domain II stretch occupies residues 69–146; the sequence is TEEEKDFFHL…RFADAGHSSA (78 aa). The interval 147–151 is flexible linker; sequence PDVPV. The domain III stretch occupies residues 152–205; it reads TGSLADQTVEVLVGQLGYKPNEARLMVAGALKRNPDVSTPEALFDEIFKHGQAQ.

This sequence belongs to the RuvA family. Homotetramer. Forms an RuvA(8)-RuvB(12)-Holliday junction (HJ) complex. HJ DNA is sandwiched between 2 RuvA tetramers; dsDNA enters through RuvA and exits via RuvB. An RuvB hexamer assembles on each DNA strand where it exits the tetramer. Each RuvB hexamer is contacted by two RuvA subunits (via domain III) on 2 adjacent RuvB subunits; this complex drives branch migration. In the full resolvosome a probable DNA-RuvA(4)-RuvB(12)-RuvC(2) complex forms which resolves the HJ.

It localises to the cytoplasm. Its function is as follows. The RuvA-RuvB-RuvC complex processes Holliday junction (HJ) DNA during genetic recombination and DNA repair, while the RuvA-RuvB complex plays an important role in the rescue of blocked DNA replication forks via replication fork reversal (RFR). RuvA specifically binds to HJ cruciform DNA, conferring on it an open structure. The RuvB hexamer acts as an ATP-dependent pump, pulling dsDNA into and through the RuvAB complex. HJ branch migration allows RuvC to scan DNA until it finds its consensus sequence, where it cleaves and resolves the cruciform DNA. The chain is Holliday junction branch migration complex subunit RuvA from Desulfosudis oleivorans (strain DSM 6200 / JCM 39069 / Hxd3) (Desulfococcus oleovorans).